Consider the following 185-residue polypeptide: uncharacterized protein (185 aa).

Residues 1–69 lie on the Cytoplasmic side of the membrane; the sequence is MSSFIDSIKS…SSDCSRAERT (69 aa). Residues 70-90 form a helical membrane-spanning segment; that stretch reads FNLILFAIVDLVICCESMAFF. Residue asparagine 91 is a topological domain, extracellular. The chain crosses the membrane as a helical span at residues 92 to 112; that stretch reads LLLKLPSMLLVSFLTMLVFSI. At 113–118 the chain is on the cytoplasmic side; sequence SYSWSA. Residues 119 to 139 form a helical membrane-spanning segment; it reads FNWISFAFSSASFLMKACILF. Residues 140 to 185 lie on the Extracellular side of the membrane; the sequence is NSSFTWFGVKAVIAEDMLYRMVRGLFCASFVKQLQTTFLATAIVLC.

The protein resides in the membrane. This is an uncharacterized protein from Saccharomyces cerevisiae (strain ATCC 204508 / S288c) (Baker's yeast).